The following is a 554-amino-acid chain: Urocanate hydratase (554 aa).

NAD(+) contacts are provided by residues 51–52 (GG), Gln-129, 175–177 (GMG), Glu-195, 241–242 (NA), 262–266 (QTSAH), 272–273 (YL), and Tyr-321. Cys-409 is a catalytic residue. Position 491 (Gly-491) interacts with NAD(+).

It belongs to the urocanase family. NAD(+) is required as a cofactor.

The protein resides in the cytoplasm. It catalyses the reaction 4-imidazolone-5-propanoate = trans-urocanate + H2O. The protein operates within amino-acid degradation; L-histidine degradation into L-glutamate; N-formimidoyl-L-glutamate from L-histidine: step 2/3. Catalyzes the conversion of urocanate to 4-imidazolone-5-propionate. In Caulobacter vibrioides (strain ATCC 19089 / CIP 103742 / CB 15) (Caulobacter crescentus), this protein is Urocanate hydratase.